The chain runs to 132 residues: Large ribosomal subunit protein uL14 (132 aa).

It belongs to the universal ribosomal protein uL14 family. In terms of assembly, part of the 50S ribosomal subunit. Forms a cluster with proteins L3 and L24e, part of which may contact the 16S rRNA in 2 intersubunit bridges.

Its function is as follows. Binds to 23S rRNA. Forms part of two intersubunit bridges in the 70S ribosome. In Halobacterium salinarum (strain ATCC 29341 / DSM 671 / R1), this protein is Large ribosomal subunit protein uL14.